We begin with the raw amino-acid sequence, 257 residues long: Protein THYLAKOID ASSEMBLY 8-like, chloroplastic (257 aa).

The transit peptide at 1 to 55 (MTAIRVCSRKFPTFASIFFQNITRNPSIHRISFSNLKPKTLLHPIPPKPFTVFVS) directs the protein to the chloroplast. PPR repeat units follow at residues 142–176 (DVFM…NLFP) and 177–211 (DSQT…PDPP).

It belongs to the PPR family. P subfamily.

The protein localises to the plastid. It is found in the chloroplast. Binds weakly to specific single strand RNA (ssRNA). In Arabidopsis thaliana (Mouse-ear cress), this protein is Protein THYLAKOID ASSEMBLY 8-like, chloroplastic.